The following is an 827-amino-acid chain: DNA-binding protein RAP1 (827 aa).

Disordered regions lie at residues 29-128 (SAAV…PLSN), 221-268 (LQEE…KVMV), and 308-339 (QKDT…ADEG). Residues 44–57 (ANQNEENTGATAAE) show a composition bias toward polar residues. A compositionally biased stretch (basic and acidic residues) spans 58–72 (TSEKVDQTEVEKKDD). Polar residues predominate over residues 92 to 107 (ATANIASTSGASVTEP). The 88-residue stretch at 121–208 (VSGPPLSNMK…SLLNMENYLV (88 aa)) folds into the BRCT domain. Residues 227 to 237 (SNGVDNSNSNS) are compositionally biased toward low complexity. Residues 238–247 (DNKDSIRPKT) show a composition bias toward basic and acidic residues. The span at 249–260 (IISTNTNGATED) shows a compositional bias: polar residues. Low complexity predominate over residues 310–319 (DTSNNNNSNV). A compositionally biased stretch (polar residues) spans 326-339 (LLTQDNNPQTADEG). One can recognise an HTH myb-type domain in the interval 355-415 (LPSHNKASFT…RFRVYLSKRL (61 aa)). The H-T-H motif DNA-binding region spans 388-411 (YDEISHYVPNHTGNSIRHRFRVYL). Phosphothreonine is present on Thr-486. A disordered region spans residues 567-613 (QNREPEPMKNLTNRPKRPGVPTPGNYNSAAKRARNYSSQRNVQPTAN). Residues 601-611 (NYSSQRNVQPT) are compositionally biased toward polar residues. The interval 630 to 695 (SYAIPENELL…IDPDTISFPP (66 aa)) is activation domain. The residue at position 731 (Ser-731) is a Phosphoserine.

This sequence belongs to the RAP1 family. In terms of assembly, interacts (via C-terminus) with RIF1. Interacts (via C-terminus) with SIR3. Interacts (via C-terminus) with SIR4. Interacts with a GCR1 homodimer.

It localises to the nucleus. The protein localises to the chromosome. It is found in the telomere. Essential regulatory protein in yeast whose DNA-binding sites are found at three types of chromosomal elements: promoters, silencers, and telomeres. RAP1 is also involved in the regulation of telomere structure, where its binding sites are found within the terminal poly[C(1-3)A] sequences. The opposite regulatory functions of RAP1 are not intrinsic to its binding sites but, instead, result from interactions with different factors at promoters and silencers. RAP1 mediates repression of the HM loci and telomeres by recruiting the SIR complex. May also target the binding of RIF1 and RIF2 to silencers and telomeres. Forms with GCR1 a transcriptional activation complex that is required for expression of glycolytic and ribosomal gene. The sequence is that of DNA-binding protein RAP1 (RAP1) from Saccharomyces cerevisiae (strain ATCC 204508 / S288c) (Baker's yeast).